The chain runs to 488 residues: Ribulose bisphosphate carboxylase large chain (488 aa).

Residues Asn127 and Thr177 each contribute to the substrate site. Residue Lys179 is the Proton acceptor of the active site. Lys181 is a substrate binding site. Mg(2+) is bound by residues Lys205, Asp207, and Glu208. Position 205 is an N6-carboxylysine (Lys205). Catalysis depends on His297, which acts as the Proton acceptor. The substrate site is built by Arg298, His330, and Ser382.

This sequence belongs to the RuBisCO large chain family. Type I subfamily. Heterohexadecamer of 8 large chains and 8 small chains. Requires Mg(2+) as cofactor.

It localises to the plastid. It is found in the chloroplast. It catalyses the reaction 2 (2R)-3-phosphoglycerate + 2 H(+) = D-ribulose 1,5-bisphosphate + CO2 + H2O. The catalysed reaction is D-ribulose 1,5-bisphosphate + O2 = 2-phosphoglycolate + (2R)-3-phosphoglycerate + 2 H(+). Its function is as follows. RuBisCO catalyzes two reactions: the carboxylation of D-ribulose 1,5-bisphosphate, the primary event in carbon dioxide fixation, as well as the oxidative fragmentation of the pentose substrate in the photorespiration process. Both reactions occur simultaneously and in competition at the same active site. This chain is Ribulose bisphosphate carboxylase large chain, found in Cyanidium caldarium (Red alga).